Here is a 2552-residue protein sequence, read N- to C-terminus: Protein TIC 214 (2552 aa).

Transmembrane regions (helical) follow at residues 15 to 35 (LIFG…SYLF), 54 to 74 (LSYG…YLPF), 78 to 98 (LSNF…QFFW), 119 to 136 (TLAF…YTFF), 154 to 174 (FKIL…LICI), and 243 to 263 (ILAT…PIPF). Residues 304 to 325 (EEQKKDEKSADEEKKRAVEEEN) form a disordered region. Residues 305–322 (EQKKDEKSADEEKKRAVE) are compositionally biased toward basic and acidic residues. A run of 3 helical transmembrane segments spans residues 362 to 382 (TLYT…AFLF), 423 to 443 (PFLV…SVYI), and 452 to 472 (FLFN…HFFF). The interval 2045–2077 (MKAEEQKKIDEEYEEKKEKRKKEQEEQGKAFDE) is disordered. Positions 2416-2511 (RRRRQLRIVN…IKKKLMRLRF (96 aa)) form a coiled coil.

This sequence belongs to the TIC214 family. In terms of assembly, part of the Tic complex.

Its subcellular location is the plastid. It is found in the chloroplast inner membrane. In terms of biological role, involved in protein precursor import into chloroplasts. May be part of an intermediate translocation complex acting as a protein-conducting channel at the inner envelope. The polypeptide is Protein TIC 214 (Pelargonium hortorum (Common geranium)).